A 133-amino-acid polypeptide reads, in one-letter code: Small ribosomal subunit protein uS8 (133 aa).

Belongs to the universal ribosomal protein uS8 family. In terms of assembly, part of the 30S ribosomal subunit. Contacts proteins S5 and S12.

Functionally, one of the primary rRNA binding proteins, it binds directly to 16S rRNA central domain where it helps coordinate assembly of the platform of the 30S subunit. This chain is Small ribosomal subunit protein uS8, found in Prochlorococcus marinus (strain MIT 9215).